A 1389-amino-acid polypeptide reads, in one-letter code: CRISPR-associated endoribonuclease Cas13a (1389 aa).

The segment at 1–347 (MGNLFGHKRW…DKHEKFKIER (347 aa)) is NTD. CrRNA is bound at residue arginine 219. Binds crRNA regions lie at residues 330-342 (YIKSYVLLDKHEK), 405-408 (KKHY), and 432-436 (YRYLK). The interval 348-498 (ENKKDKIVKF…KLRHNDIDMT (151 aa)) is helical-1. Catalysis depends on for pre-crRNA processing residues arginine 438 and lysine 441. Lysine 441 is a binding site for crRNA. A binds crRNA region spans residues 471-475 (KILKR). Position 489 (lysine 489) interacts with crRNA. The segment at 499-636 (TVNTDDFSRL…LKISDEEVSK (138 aa)) is HEPN-like fold 1-I. Residues 502 to 509 (TDDFSRLH) are binds crRNA. Catalysis depends on for target ssRNA cleavage residues arginine 597 and histidine 602. The helical-2 stretch occupies residues 637–828 (ALNLDVVFKD…ERITVKTSDK (192 aa)). Glutamine 759 contributes to the crRNA binding site. Residues 829 to 899 (TIVINDDFEY…ECITENWNLN (71 aa)) are HEPN-like fold 1-II. The interval 853–858 (NKIRNR) is binds crRNA. Tryptophan 865 is a crRNA binding site. 3 coiled-coil regions span residues 893 to 920 (TENWNLNLEEFIQKMKEIEKDFDDFKIQ), 968 to 1046 (EIDK…FQEI), and 1101 to 1131 (KNKISEIDAILKNLNDKLNGYSKEYKEKYIK). The tract at residues 900 to 1170 (LEEFIQKMKE…EYKKIRDLVE (271 aa)) is linker. Positions 1170 to 1290 (EFNYLNKIES…ISHFYIVRNP (121 aa)) are HEPN-like fold 2. Residues arginine 1278 and histidine 1283 each act as for target ssRNA cleavage in the active site. Binds crRNA stretches follow at residues 1311-1316 (TRYNNS) and 1338-1339 (KK).

Belongs to the CRISPR-associated endoribonuclease Cas13a family. As to quaternary structure, monomer. Requires Mg(2+) as cofactor.

Its activity is regulated as follows. RNase activity on target is decreased by EDTA. Target RNA acts as an activator for non-specific ssRNA degradation. Functionally, CRISPR (clustered regularly interspaced short palindromic repeat), is an adaptive immune system that provides protection against mobile genetic elements (viruses, transposable elements and conjugative plasmids). CRISPR clusters contain sequences complementary to antecedent mobile elements (spacers) and target invading nucleic acids. Unlike many single-component effectors, this CRISPR-Cas system targets RNA. CRISPR clusters are transcribed from pre-CRISPR RNA (crRNA) and processed into crRNA (optimally 28 nucleotides in this system) by this protein. This protein processes pre-crRNA at a 'non-typical' site 1 nucleotide upstream of the pre-crRNA stem-loop; it cleaves pre-crRNA from L.buccalis and L.wadei in a similar fashion, whereas the enzymes from the latter 2 bacteria cleave their own pre-crRNA 3 nt further upstream. When the appropriate target sequences are cloned into the CRISPR array, confers immunity to ssRNA(+) enterobacteria phage MS2. Cleaves linear target ssRNA in a crRNA-dependent fashion, preferentially before U residues; has no activity on partially dsRNA, ssDNA or dsDNA. RNA secondary structure surrounding the target influence the cleavage site and efficiency; unlike other CRISPR-Cas effectors Cas13a cleaves outside of the crRNA binding site. In the presence of a viable RNA target other RNAs are also degraded (called collateral RNA degradation), suggesting this type of CRISPR-Cas might also prevent viral spread by inducing programmed cell death or dormancy. This system has a 3' protospacer flanking site (PFS), it does not cleave when the 3' PFS is G (PFS is equivalent to PAM, the protospacer adjacent motif). Mutations of its active site residues results in an RNA-programmed RNA-binding protein. This is CRISPR-associated endoribonuclease Cas13a from Leptotrichia shahii (strain DSM 19757 / CCUG 47503 / CIP 107916 / JCM 16776 / LB37).